A 148-amino-acid chain; its full sequence is 3-hydroxyacyl-[acyl-carrier-protein] dehydratase FabZ (148 aa).

Residue His50 is part of the active site.

Belongs to the thioester dehydratase family. FabZ subfamily.

The protein resides in the cytoplasm. The catalysed reaction is a (3R)-hydroxyacyl-[ACP] = a (2E)-enoyl-[ACP] + H2O. Functionally, involved in unsaturated fatty acids biosynthesis. Catalyzes the dehydration of short chain beta-hydroxyacyl-ACPs and long chain saturated and unsaturated beta-hydroxyacyl-ACPs. In Levilactobacillus brevis (strain ATCC 367 / BCRC 12310 / CIP 105137 / JCM 1170 / LMG 11437 / NCIMB 947 / NCTC 947) (Lactobacillus brevis), this protein is 3-hydroxyacyl-[acyl-carrier-protein] dehydratase FabZ.